A 623-amino-acid chain; its full sequence is Fanconi anemia group G protein homolog (623 aa).

TPR repeat units lie at residues 251 to 284 (VQVY…GTTC), 349 to 382 (SQAK…LLGG), 458 to 491 (SATH…LFRT), and 517 to 550 (VAAL…CPGN).

As to quaternary structure, belongs to the multisubunit FA complex composed of FANCA, FANCB, FANCC, FANCE, FANCF, FANCG, FANCL/PHF9 and FANCM. In complex with FANCF, FANCA and FANCL, but not with FANCC, nor FANCE, interacts with HES1; this interaction may be essential for the stability and nuclear localization of FA core complex proteins. The complex with FANCC and FANCG may also include EIF2AK2 and HSP70. Highest expression levels in spleen, thymus and testis.

The protein localises to the nucleus. Its function is as follows. DNA repair protein that may operate in a postreplication repair or a cell cycle checkpoint function. May be implicated in interstrand DNA cross-link repair and in the maintenance of normal chromosome stability. Candidate tumor suppressor gene. The sequence is that of Fanconi anemia group G protein homolog (Fancg) from Mus musculus (Mouse).